The sequence spans 439 residues: Protein disulfide-isomerase A6 (439 aa).

The signal sequence occupies residues 1 to 19; sequence MARLGFGLVSCTFFLAASG. Thioredoxin domains lie at 20–133 and 151–287; these read LYSS…ALRQ and QGRG…EDVA. Catalysis depends on nucleophile residues C55 and C58. A disulfide bridge connects residues C55 and C58. Phosphoserine is present on residues S129, S156, and S158. The segment at 141-160 is disordered; the sequence is GRSGGYSSGKQGRGDSSSKK. Active-site nucleophile residues include C190 and C193. C190 and C193 form a disulfide bridge. The disordered stretch occupies residues 400–425; sequence GSFPAITAREPWDGRDGELPVEDDID. S427 is subject to Phosphoserine. The Prevents secretion from ER motif lies at 436–439; it reads KDEL.

It belongs to the protein disulfide isomerase family. In terms of assembly, part of a large chaperone multiprotein complex comprising DNAJB11, HSP90B1, HSPA5, HYOU, PDIA2, PDIA4, PDIA6, PPIB, SDF2L1, UGGT1 and very small amounts of ERP29, but not, or at very low levels, CALR nor CANX. Interacts with MICA on the surface of tumor cells, leading to MICA disulfide bond reduction which is required for its release from tumor cells. Interacts with ITGB3 following platelet stimulation. Interacts with ERN1; the interaction is direct. Interacts with EIF2AK3. As to expression, expressed most abundantly in lung and kidney, followed by heart, liver and brain.

Its subcellular location is the endoplasmic reticulum lumen. The protein resides in the cell membrane. It is found in the melanosome. The enzyme catalyses Catalyzes the rearrangement of -S-S- bonds in proteins.. May function as a chaperone that inhibits aggregation of misfolded proteins. Negatively regulates the unfolded protein response (UPR) through binding to UPR sensors such as ERN1, which in turn inactivates ERN1 signaling. May also regulate the UPR via the EIF2AK3 UPR sensor. Plays a role in platelet aggregation and activation by agonists such as convulxin, collagen and thrombin. In Mesocricetus auratus (Golden hamster), this protein is Protein disulfide-isomerase A6 (PDIA6).